The following is a 145-amino-acid chain: uncharacterized protein (145 aa).

Residues Leu-1–Pro-145 form the CBM3 domain.

This is an uncharacterized protein from Paenibacillus lautus (Bacillus lautus).